Consider the following 306-residue polypeptide: B- and T-lymphocyte attenuator (306 aa).

The N-terminal stretch at 1–29 is a signal peptide; the sequence is MKTVPAMLGTPRLFREFFILHLGLWSILC. The Extracellular segment spans residues 30 to 183; the sequence is EKATKRNDEE…ERPGRTWLLY (154 aa). In terms of domain architecture, Ig-like V-type spans 37 to 139; it reads DEECPVQLTI…SQVINSHSVT (103 aa). Cystine bridges form between Cys-40-Cys-69, Cys-64-Cys-124, and Cys-78-Cys-85. 6 N-linked (GlcNAc...) asparagine glycosylation sites follow: Asn-74, Asn-81, Asn-101, Asn-119, Asn-148, and Asn-165. The chain crosses the membrane as a helical span at residues 184–204; the sequence is TLLPLGALLLLLACVCLLCFL. The Cytoplasmic segment spans residues 205–306; sequence KRIQGKEKKP…TEYASICVRS (102 aa).

As to quaternary structure, interacts with tyrosine phosphatases PTPN6/SHP-1 and PTPN11/SHP-2. Interacts with TNFRSF14/HVEM (via cysteine-rich domain 1). In terms of processing, phosphorylated on Tyr residues by TNFRSF14 and by antigen receptors cross-linking, both inducing association with PTPN6 and PTPN11. N-glycosylated. Expressed in splenic T- and B-cells as well as lymph node tissues but very weakly in somatic tissues. Also expressed in macrophages, NK cells and dendritic cells. A polymorphic tissue distribution between several strains is seen.

The protein localises to the cell membrane. Its function is as follows. Inhibitory receptor on lymphocytes that negatively regulates antigen receptor signaling via PTPN6/SHP-1 and PTPN11/SHP-2. May interact in cis (on the same cell) or in trans (on other cells) with TNFRSF14. In cis interactions, appears to play an immune regulatory role inhibiting in trans interactions in naive T cells to maintain a resting state. In trans interactions, can predominate during adaptive immune response to provide survival signals to effector T cells. The protein is B- and T-lymphocyte attenuator of Mus musculus (Mouse).